Reading from the N-terminus, the 323-residue chain is tRNA U34 carboxymethyltransferase (323 aa).

Carboxy-S-adenosyl-L-methionine-binding positions include Lys-91, Trp-105, Lys-110, Gly-130, 181–182 (IE), Met-196, Tyr-200, and Arg-315.

Belongs to the class I-like SAM-binding methyltransferase superfamily. CmoB family. As to quaternary structure, homotetramer.

The catalysed reaction is carboxy-S-adenosyl-L-methionine + 5-hydroxyuridine(34) in tRNA = 5-carboxymethoxyuridine(34) in tRNA + S-adenosyl-L-homocysteine + H(+). In terms of biological role, catalyzes carboxymethyl transfer from carboxy-S-adenosyl-L-methionine (Cx-SAM) to 5-hydroxyuridine (ho5U) to form 5-carboxymethoxyuridine (cmo5U) at position 34 in tRNAs. In Yersinia pseudotuberculosis serotype O:3 (strain YPIII), this protein is tRNA U34 carboxymethyltransferase.